A 307-amino-acid chain; its full sequence is Olfactory receptor 8K5 (307 aa).

Residues 1–25 (MGQHNLTVLTEFILMELTRRPELQI) are Extracellular-facing. N-linked (GlcNAc...) asparagine glycosylation is present at Asn5. A helical transmembrane segment spans residues 26–46 (PLFGVFLVIYLITVVGNLTMI). Residues 47-54 (ILTKLDSH) are Cytoplasmic-facing. A helical membrane pass occupies residues 55-75 (LHTPMYFSIRHLAFVDLGNST). The Extracellular segment spans residues 76-99 (VICPKVLANFVVDRNTISYYACAA). An intrachain disulfide couples Cys97 to Cys189. The helical transmembrane segment at 100 to 120 (QLAFFLMFIISEFFILSAMAY) threads the bilayer. Over 121 to 139 (DRYVAICNPLLYYVIMSQR) the chain is Cytoplasmic. A helical transmembrane segment spans residues 140-160 (LCHVLVGIQYLYSTFQALMFT). Topologically, residues 161–197 (IKIFTLTFCGSNVISHFYCDDVPLLPMLCSNAQEIEL) are extracellular. A helical transmembrane segment spans residues 198–217 (LSILFSVFNLISSFLIVLVS). Residues 218–237 (YMLILLAICQMHSAEGRKKA) lie on the Cytoplasmic side of the membrane. Residues 238-258 (FSTCGSHLTVVVVFYGSLLFM) form a helical membrane-spanning segment. Residues 259–271 (YMQPNSTHFFDTD) lie on the Extracellular side of the membrane. N-linked (GlcNAc...) asparagine glycosylation occurs at Asn263. A helical membrane pass occupies residues 272 to 292 (KMASVFYTLVIPMLNPLIYSL). Residues 293–307 (RNEEVKNAFYKLFEN) lie on the Cytoplasmic side of the membrane.

The protein belongs to the G-protein coupled receptor 1 family.

The protein resides in the cell membrane. Its function is as follows. Odorant receptor. The sequence is that of Olfactory receptor 8K5 (OR8K5) from Homo sapiens (Human).